Consider the following 728-residue polypeptide: Phosphoribosylformylglycinamidine synthase subunit PurL (728 aa).

Residue H42 is part of the active site. Residues Y45 and K84 each coordinate ATP. Residue E86 participates in Mg(2+) binding. Residues 87 to 90 (SHNH) and R109 contribute to the substrate site. Residue H88 is the Proton acceptor of the active site. D110 provides a ligand contact to Mg(2+). Q237 lines the substrate pocket. D265 contributes to the Mg(2+) binding site. 309–311 (ESQ) contributes to the substrate binding site. Positions 491 and 528 each coordinate ATP. N529 is a binding site for Mg(2+). Position 531 (S531) interacts with substrate.

It belongs to the FGAMS family. Monomer. Part of the FGAM synthase complex composed of 1 PurL, 1 PurQ and 2 PurS subunits.

It localises to the cytoplasm. The catalysed reaction is N(2)-formyl-N(1)-(5-phospho-beta-D-ribosyl)glycinamide + L-glutamine + ATP + H2O = 2-formamido-N(1)-(5-O-phospho-beta-D-ribosyl)acetamidine + L-glutamate + ADP + phosphate + H(+). It functions in the pathway purine metabolism; IMP biosynthesis via de novo pathway; 5-amino-1-(5-phospho-D-ribosyl)imidazole from N(2)-formyl-N(1)-(5-phospho-D-ribosyl)glycinamide: step 1/2. Functionally, part of the phosphoribosylformylglycinamidine synthase complex involved in the purines biosynthetic pathway. Catalyzes the ATP-dependent conversion of formylglycinamide ribonucleotide (FGAR) and glutamine to yield formylglycinamidine ribonucleotide (FGAM) and glutamate. The FGAM synthase complex is composed of three subunits. PurQ produces an ammonia molecule by converting glutamine to glutamate. PurL transfers the ammonia molecule to FGAR to form FGAM in an ATP-dependent manner. PurS interacts with PurQ and PurL and is thought to assist in the transfer of the ammonia molecule from PurQ to PurL. This is Phosphoribosylformylglycinamidine synthase subunit PurL from Campylobacter jejuni subsp. jejuni serotype O:2 (strain ATCC 700819 / NCTC 11168).